Consider the following 440-residue polypeptide: MESSMPDTAVAEDYKVRDIGLADWGRKEIRMAEDEMPGLMALREEYGNSKPLAGARIAGCLHMTIQTAVLIETLTALGATVRWSSCNIFSTQDHAAAGIAAAGIPVFAWKGLSEEEFWWCIEQTVRGPDGWTPNMILDDGGDLTVLMHDKYPEMLKDVRGLSEETTTGVHRLWEMAKAGKLLTPAINVNDSVTKSKFDNLYGCRESLVDGIRRGTDVMMAGKIAVVAGFGDVGKGSAASLRNAGCRVLVTEIDPICALQAAMEGYEVVTMDEAASRGDLFVTATGNVDVITIDHMRAMKNRAIVCNIGHFDSEIQIESLRNYRWENVKPQVDEVVFPDGKRLIILSEGRLVNLGNATGHPSFVMSASFTNQVLAQIELWQAKPGQYLPNHVYTLPKHLDEKVAALHLAKVGAKLTKLSDKQAEYIGVSQAGPFKHDLYRY.

Positions 64, 139, and 164 each coordinate substrate. 165 to 167 (TTT) lines the NAD(+) pocket. Lys194 and Asp198 together coordinate substrate. Residues Asn199, 228-233 (GFGDVG), Glu251, Asn286, 307-309 (IGH), and Asn352 contribute to the NAD(+) site.

Belongs to the adenosylhomocysteinase family. Requires NAD(+) as cofactor.

The protein localises to the cytoplasm. It carries out the reaction S-adenosyl-L-homocysteine + H2O = L-homocysteine + adenosine. The protein operates within amino-acid biosynthesis; L-homocysteine biosynthesis; L-homocysteine from S-adenosyl-L-homocysteine: step 1/1. In terms of biological role, may play a key role in the regulation of the intracellular concentration of adenosylhomocysteine. This chain is Adenosylhomocysteinase, found in Granulibacter bethesdensis (strain ATCC BAA-1260 / CGDNIH1).